A 144-amino-acid chain; its full sequence is Bacilliredoxin SSP1311 (144 aa).

It belongs to the bacilliredoxin family.

This Staphylococcus saprophyticus subsp. saprophyticus (strain ATCC 15305 / DSM 20229 / NCIMB 8711 / NCTC 7292 / S-41) protein is Bacilliredoxin SSP1311.